Here is a 322-residue protein sequence, read N- to C-terminus: N-acetyl-gamma-glutamyl-phosphate reductase (322 aa).

Cys-132 is an active-site residue.

Belongs to the NAGSA dehydrogenase family. Type 1 subfamily.

It is found in the cytoplasm. The enzyme catalyses N-acetyl-L-glutamate 5-semialdehyde + phosphate + NADP(+) = N-acetyl-L-glutamyl 5-phosphate + NADPH + H(+). The protein operates within amino-acid biosynthesis; L-arginine biosynthesis; N(2)-acetyl-L-ornithine from L-glutamate: step 3/4. In terms of biological role, catalyzes the NADPH-dependent reduction of N-acetyl-5-glutamyl phosphate to yield N-acetyl-L-glutamate 5-semialdehyde. This chain is N-acetyl-gamma-glutamyl-phosphate reductase, found in Phocaeicola vulgatus (strain ATCC 8482 / DSM 1447 / JCM 5826 / CCUG 4940 / NBRC 14291 / NCTC 11154) (Bacteroides vulgatus).